We begin with the raw amino-acid sequence, 156 residues long: ATP synthase subunit b (156 aa).

A helical transmembrane segment spans residues 11 to 31; sequence AIAFILFVWFCMKYVWPPLMA.

It belongs to the ATPase B chain family. In terms of assembly, F-type ATPases have 2 components, F(1) - the catalytic core - and F(0) - the membrane proton channel. F(1) has five subunits: alpha(3), beta(3), gamma(1), delta(1), epsilon(1). F(0) has three main subunits: a(1), b(2) and c(10-14). The alpha and beta chains form an alternating ring which encloses part of the gamma chain. F(1) is attached to F(0) by a central stalk formed by the gamma and epsilon chains, while a peripheral stalk is formed by the delta and b chains.

It localises to the cell inner membrane. Functionally, f(1)F(0) ATP synthase produces ATP from ADP in the presence of a proton or sodium gradient. F-type ATPases consist of two structural domains, F(1) containing the extramembraneous catalytic core and F(0) containing the membrane proton channel, linked together by a central stalk and a peripheral stalk. During catalysis, ATP synthesis in the catalytic domain of F(1) is coupled via a rotary mechanism of the central stalk subunits to proton translocation. In terms of biological role, component of the F(0) channel, it forms part of the peripheral stalk, linking F(1) to F(0). In Salmonella agona (strain SL483), this protein is ATP synthase subunit b.